A 133-amino-acid polypeptide reads, in one-letter code: Fluoride-specific ion channel FluC 3 (133 aa).

3 helical membrane-spanning segments follow: residues 7-27, 37-57, and 60-80; these read ILVL…SGYV, WGTF…AGLG, and LGAI…LLGG. G79 and T82 together coordinate Na(+). A helical transmembrane segment spans residues 107–127; the sequence is IVASALLCVLAVAAGYGGIMW.

This sequence belongs to the fluoride channel Fluc/FEX (TC 1.A.43) family.

It is found in the cell inner membrane. The enzyme catalyses fluoride(in) = fluoride(out). With respect to regulation, na(+) is not transported, but it plays an essential structural role and its presence is essential for fluoride channel function. Fluoride-specific ion channel. Important for reducing fluoride concentration in the cell, thus reducing its toxicity. The sequence is that of Fluoride-specific ion channel FluC 3 from Brucella suis biovar 1 (strain 1330).